The primary structure comprises 130 residues: Putative antitoxin VapB50 (130 aa).

Functionally, possibly the antitoxin component of a type II toxin-antitoxin (TA) system. Its cognate toxin is VapC50. In Mycobacterium tuberculosis (strain ATCC 25618 / H37Rv), this protein is Putative antitoxin VapB50.